The chain runs to 1413 residues: DNA-directed RNA polymerase subunit beta' (1413 aa).

Residues Cys70, Cys72, Cys85, and Cys88 each coordinate Zn(2+). Residues Asp460, Asp462, and Asp464 each contribute to the Mg(2+) site. Zn(2+) is bound by residues Cys819, Cys893, Cys900, and Cys903. A disordered region spans residues 1392–1413 (EEAFDFGTPSAPAEEPQHPAAE).

The protein belongs to the RNA polymerase beta' chain family. As to quaternary structure, the RNAP catalytic core consists of 2 alpha, 1 beta, 1 beta' and 1 omega subunit. When a sigma factor is associated with the core the holoenzyme is formed, which can initiate transcription. Mg(2+) serves as cofactor. Requires Zn(2+) as cofactor.

It carries out the reaction RNA(n) + a ribonucleoside 5'-triphosphate = RNA(n+1) + diphosphate. DNA-dependent RNA polymerase catalyzes the transcription of DNA into RNA using the four ribonucleoside triphosphates as substrates. The protein is DNA-directed RNA polymerase subunit beta' of Burkholderia orbicola (strain MC0-3).